The following is a 227-amino-acid chain: Translation initiation factor 6 (227 aa).

The protein belongs to the eIF-6 family.

Functionally, binds to the 50S ribosomal subunit and prevents its association with the 30S ribosomal subunit to form the 70S initiation complex. The sequence is that of Translation initiation factor 6 from Methanococcus maripaludis (strain DSM 14266 / JCM 13030 / NBRC 101832 / S2 / LL).